Reading from the N-terminus, the 436-residue chain is 3-ketoacyl-CoA thiolase (436 aa).

Cysteine 99 functions as the Acyl-thioester intermediate in the catalytic mechanism. Residues histidine 392 and cysteine 422 each act as proton acceptor in the active site.

This sequence belongs to the thiolase-like superfamily. Thiolase family. Heterotetramer of two alpha chains (FadJ) and two beta chains (FadI).

The protein resides in the cytoplasm. The catalysed reaction is an acyl-CoA + acetyl-CoA = a 3-oxoacyl-CoA + CoA. It functions in the pathway lipid metabolism; fatty acid beta-oxidation. Its function is as follows. Catalyzes the final step of fatty acid oxidation in which acetyl-CoA is released and the CoA ester of a fatty acid two carbons shorter is formed. This chain is 3-ketoacyl-CoA thiolase, found in Alteromonas mediterranea (strain DSM 17117 / CIP 110805 / LMG 28347 / Deep ecotype).